Consider the following 1378-residue polypeptide: DNA-directed RNA polymerase subunit beta (1378 aa).

The protein belongs to the RNA polymerase beta chain family. In terms of assembly, the RNAP catalytic core consists of 2 alpha, 1 beta, 1 beta' and 1 omega subunit. When a sigma factor is associated with the core the holoenzyme is formed, which can initiate transcription.

It catalyses the reaction RNA(n) + a ribonucleoside 5'-triphosphate = RNA(n+1) + diphosphate. In terms of biological role, DNA-dependent RNA polymerase catalyzes the transcription of DNA into RNA using the four ribonucleoside triphosphates as substrates. The sequence is that of DNA-directed RNA polymerase subunit beta from Campylobacter jejuni subsp. jejuni serotype O:23/36 (strain 81-176).